A 203-amino-acid chain; its full sequence is Transcriptional regulator GfcR (203 aa).

This sequence belongs to the purine/pyrimidine phosphoribosyltransferase family. GfcR subfamily.

The polypeptide is Transcriptional regulator GfcR (Methanococcoides burtonii (strain DSM 6242 / NBRC 107633 / OCM 468 / ACE-M)).